A 447-amino-acid chain; its full sequence is Protein CLT1, chloroplastic (447 aa).

The N-terminal 48 residues, 1–48 (MATTSSDRLIAGLTASIGSIESRYANPAQSVSLICRNQINGAPPIVLR), are a transit peptide targeting the chloroplast. Helical transmembrane passes span 103–123 (MEIVIAAATTAALGVGNRVLY), 135–155 (FFLAQLSTFGYVAVYFSILYF), 172–192 (LPFLIVGVLESLALAAGMAAA), 200–220 (TTVLSQTFLVWQILFSIIFLG), 228–248 (ILGCTLVAFGVIVSVASGSGA), 256–276 (GILWSLLMVFSFLLQGADTVM), 304–324 (IFQVICIALLLPFLSKLWGIP), 351–371 (GAPLLPVMFVMMNMAYNISLL), 387–407 (TVSVPIAVYCFTLPLPYLGVA), and 413–433 (GFVAGTIILVVGMLLYAWTPS).

Belongs to the CRT-like transporter family.

Its subcellular location is the plastid. The protein resides in the chloroplast membrane. Its function is as follows. Involved in thiol transport from the plastid to the cytosol. Transports probably both glutathione (GSH) and its precursor, gamma-glutamylcysteine (gamma-EC). Exhibits some functional redundancy with CLT3 in maintaining the root GSH pool. The protein is Protein CLT1, chloroplastic of Arabidopsis thaliana (Mouse-ear cress).